We begin with the raw amino-acid sequence, 341 residues long: Gibberellin 2-beta-dioxygenase 2 (341 aa).

Residues 179-283 (KSDSCLRLNH…RISMIYFGGP (105 aa)) enclose the Fe2OG dioxygenase domain. Positions 207, 209, and 264 each coordinate Fe cation. Arginine 274 is a catalytic residue. Arginine 274 is a binding site for 2-oxoglutarate.

Belongs to the iron/ascorbate-dependent oxidoreductase family. GA2OX subfamily. The cofactor is Fe(2+). Preferentially expressed in flowers, siliques, and upper stems. Expressed in cotyledons, at the base of the shoot apical meristem and developing leaf primordia.

It carries out the reaction gibberellin A1 + 2-oxoglutarate + O2 = gibberellin A8 + succinate + CO2. It participates in plant hormone biosynthesis; gibberellin biosynthesis. Catalyzes the 2-beta-hydroxylation of several biologically active gibberellins, leading to the homeostatic regulation of their endogenous level. Catabolism of gibberellins (GAs) plays a central role in plant development. Converts GA9/GA20 to GA51/GA29 and GA4/GA1 to GA34/GA8. The sequence is that of Gibberellin 2-beta-dioxygenase 2 (GA2OX2) from Arabidopsis thaliana (Mouse-ear cress).